Consider the following 329-residue polypeptide: GTPase Obg (329 aa).

Residues 1-159 (MQFIDQARIT…WPLQLELKLL (159 aa)) enclose the Obg domain. One can recognise an OBG-type G domain in the interval 160-328 (AEVGIIGLPN…LLAETWVELG (169 aa)). ATP is bound by residues 166 to 173 (GLPNAGKS), 191 to 195 (FTTLV), 213 to 216 (DIPG), 280 to 283 (NKQE), and 309 to 311 (SAA). Positions 173 and 193 each coordinate Mg(2+).

The protein belongs to the TRAFAC class OBG-HflX-like GTPase superfamily. OBG GTPase family. As to quaternary structure, monomer. Requires Mg(2+) as cofactor.

It is found in the cytoplasm. Its function is as follows. An essential GTPase which binds GTP, GDP and possibly (p)ppGpp with moderate affinity, with high nucleotide exchange rates and a fairly low GTP hydrolysis rate. Plays a role in control of the cell cycle, stress response, ribosome biogenesis and in those bacteria that undergo differentiation, in morphogenesis control. The polypeptide is GTPase Obg (Synechococcus sp. (strain CC9605)).